The following is a 301-amino-acid chain: Glycosyltransferase GlyG (301 aa).

This sequence belongs to the glycosyltransferase 2 family.

It participates in protein modification; protein glycosylation. In terms of biological role, involved in the polymorphic O-glycosylation of the serine-rich repeat protein PsrP. Catalyzes the third step in glycosylation PsrP in this bacteria. Transfers glucose from UDP-glucose to the terminal glucose moiety of already-glycosylated PsrP (using truncated substrates with PsrP SSR1-GlcNAc-Glc). Has a marked preference for PsrP substrate that has already been modified by GlcNAc and glucose. In vitro has hydrolytic activity against UDP-glucose and to a lesser extent against UDP-galactose. Functionally, also catalyzes the fourth step in glycosylation of the serine-rich repeat protein PsrP in this bacteria. Can transfer the sugar from UDP-glucose (and much less well from UDP-galactose) to the terminal sugar moiety of PsrP-GlcNAc-Glc-Gal or of PsrP-GlcNAc-Glc-Glc. The polypeptide is Glycosyltransferase GlyG (Streptococcus pneumoniae serotype 4 (strain ATCC BAA-334 / TIGR4)).